The following is a 239-amino-acid chain: Tetraspanin-9 (239 aa).

Residues 1–13 (MARGCLCCLKYMM) lie on the Cytoplasmic side of the membrane. A helical membrane pass occupies residues 14 to 34 (FLFNLIFWLCGCGLLGVGIWL). Topologically, residues 35-55 (SVSQGNFATFSPSFPSLSAAN) are extracellular. A helical transmembrane segment spans residues 56–76 (LVIAIGTIVMVTGFLGCLGAI). The Cytoplasmic segment spans residues 77-85 (KENKCLLLS). The chain crosses the membrane as a helical span at residues 86-106 (FFIILLIILLAELILLILFFV). The Extracellular segment spans residues 107–203 (YMDKVNENAK…VKMWFDDNKH (97 aa)). N180 carries N-linked (GlcNAc...) asparagine glycosylation. The chain crosses the membrane as a helical span at residues 204–224 (VLGTIGMCILIIQILGMAFSM). The Cytoplasmic segment spans residues 225–239 (TLFQQIHRTGKKYDA).

Belongs to the tetraspanin (TM4SF) family.

Its subcellular location is the membrane. The sequence is that of Tetraspanin-9 (tspan9) from Xenopus tropicalis (Western clawed frog).